Consider the following 398-residue polypeptide: Vacuolar protease A (398 aa).

The first 18 residues, 1–18 (MKSTSLLTASVLLGSASA), serve as a signal peptide directing secretion. Residues 19 to 70 (AVHKLKLNKVPLDEQLYTHNIDAHVRALGQKYMGIRPNVHQELLEENSLNDM) constitute a propeptide, activation peptide. Residues 85 to 395 (YFSEISLGTP…DLGNNAVGLA (311 aa)) form the Peptidase A1 domain. Residue Asp103 is part of the active site. Cys116 and Cys121 are disulfide-bonded. Asn138 carries N-linked (GlcNAc...) asparagine glycosylation. Asp287 is a catalytic residue. Cys321 and Cys354 are oxidised to a cystine. N-linked (GlcNAc...) asparagine glycosylation is present at Asn338.

It belongs to the peptidase A1 family.

It localises to the vacuole lumen. The protein localises to the secreted. The catalysed reaction is Hydrolysis of proteins with broad specificity for peptide bonds. Cleaves -Leu-Leu-|-Val-Tyr- bond in a synthetic substrate. Does not act on esters of Tyr or Arg.. Its function is as follows. Vacuolar aspartic endopeptidase which is probably also secreted and contributes to virulence. This chain is Vacuolar protease A (pep2), found in Aspergillus fumigatus (strain ATCC MYA-4609 / CBS 101355 / FGSC A1100 / Af293) (Neosartorya fumigata).